The primary structure comprises 291 residues: ATP synthase gamma chain (291 aa).

This sequence belongs to the ATPase gamma chain family. In terms of assembly, F-type ATPases have 2 components, CF(1) - the catalytic core - and CF(0) - the membrane proton channel. CF(1) has five subunits: alpha(3), beta(3), gamma(1), delta(1), epsilon(1). CF(0) has three main subunits: a, b and c.

It localises to the cell inner membrane. Its function is as follows. Produces ATP from ADP in the presence of a proton gradient across the membrane. The gamma chain is believed to be important in regulating ATPase activity and the flow of protons through the CF(0) complex. This is ATP synthase gamma chain from Neisseria meningitidis serogroup A / serotype 4A (strain DSM 15465 / Z2491).